The primary structure comprises 331 residues: RNA/RNP complex-1-interacting phosphatase (331 aa).

The Tyrosine-protein phosphatase domain maps to 61-208 (FEKHLAPEEC…LRNGPIRKNW (148 aa)). Residue cysteine 152 is the Phosphocysteine intermediate of the active site. Substrate is bound at residue 153–158 (THGVNR). The active-site Proton donor/acceptor is arginine 158.

Belongs to the protein-tyrosine phosphatase family. Non-receptor class dual specificity subfamily. In terms of assembly, monomer. May interact with SFRS7 and SFRS9/SRP30C.

It localises to the nucleus. The protein resides in the nucleus speckle. Possesses RNA 5'-triphosphatase and diphosphatase activities, but displays a poor protein-tyrosine phosphatase activity. In addition, has phosphatase activity with ATP, ADP and O-methylfluorescein phosphate (in vitro). Binds to RNA. May participate in nuclear mRNA metabolism. In Bos taurus (Bovine), this protein is RNA/RNP complex-1-interacting phosphatase (DUSP11).